The sequence spans 90 residues: Antitoxin epsilon (90 aa).

Belongs to the epsilon antitoxin family. In the presence of the zeta toxin, forms an inactive PezA(2)PezT(2) heterotetramer.

In terms of biological role, antitoxin component of a type II toxin-antitoxin (TA) system. Neutralizes the toxic effect of cognate zeta toxin. Part of a postsegregational killing (PSK) system involved in the killing of plasmid-free cells. Continuous synthesis of the epsilon antitoxin is required to counteract the zeta toxin. The chain is Antitoxin epsilon from Streptococcus agalactiae.